We begin with the raw amino-acid sequence, 260 residues long: MSDQVMPTGQNPALQIRNLDFFYGDFKGLKNVNLDIAQKKVTAFIGPSGCGKSTLLRTFNRMYDLYPGQRAEGEILFHGKNLLEKSQDVNLVRAKIGMVFQKPTPFPMTIYENIAFGVRLYQRMSGSAMDDRVEWALKKAALWGEVKDKLNQSGLSLSGGQQQRLCIARAVAVKPEIVLLDEPTSALDPISTAKIEELINELKSDYTIAIVTHNMQQAARISDYTAFMYLGELIEFNETGTIFMRPGKKQTEDYITGRFG.

Residues 14–255 (LQIRNLDFFY…PGKKQTEDYI (242 aa)) enclose the ABC transporter domain. Residue 46–53 (GPSGCGKS) coordinates ATP.

This sequence belongs to the ABC transporter superfamily. Phosphate importer (TC 3.A.1.7) family. The complex is composed of two ATP-binding proteins (PstB), two transmembrane proteins (PstC and PstA) and a solute-binding protein (PstS).

The protein resides in the cell inner membrane. The catalysed reaction is phosphate(out) + ATP + H2O = ADP + 2 phosphate(in) + H(+). Its function is as follows. Part of the ABC transporter complex PstSACB involved in phosphate import. Responsible for energy coupling to the transport system. This Thiobacillus denitrificans (strain ATCC 25259 / T1) protein is Phosphate import ATP-binding protein PstB.